We begin with the raw amino-acid sequence, 423 residues long: MDLVTKLPQNIWKTFTLFINMANYLKRLISPWSKSMTAGESLYSSQNSSSPEVIEDIGKAVTEGNLQKVIGIVKDEIQSKSRYRVKIAVTGDSGNGMSSFINALRFIGHEEEDSAPTGVVRTTKKPACYSSDSHFPYVELWDLPGLGATAQSVESYLEEMQISTFDLIIIVASEQFSSNHVKLAITMQRMRKRFYVVWTKLDRDLSTSTFPEPQLLQSIQRNIRENLQQAQVRDPPLFLISCFSPSFHDFPELRNTLQKDIFSIRYRDPLEIISQVCDKCISNKAFSLKEDQMLMKDLEAAVSSEDDTANLERGLQTYQKLFGVDDGSLQQVARSTGRLEMGSRALQFQDLIKMDRRLELMMCFAVNKFLRLLESSWWYGLWNVVTRYFRHQRHKLVIEIVAENTKTSLRKALKDSVLPPEIH.

Residues 83–260 (YRVKIAVTGD…PELRNTLQKD (178 aa)) form the IRG-type G domain. Residues 92 to 99 (DSGNGMSS), 117 to 121 (TGVVR), and 200 to 202 (KLD) contribute to the GTP site.

It belongs to the TRAFAC class dynamin-like GTPase superfamily. IRG family.

Its subcellular location is the endoplasmic reticulum. It is found in the cytoplasmic vesicle membrane. The protein localises to the lipid droplet. The enzyme catalyses GTP + H2O = GDP + phosphate + H(+). Its function is as follows. Immunity-related GTPase that plays important roles in host resistance to acute infection by protozoan, such as Toxoplasma gondii and Leishmania major. Acts as a dynamin-like protein that binds to intracellular membranes and promotes remodeling and trafficking of those membranes. Acts predominantly to restrict acute protozoan infection: expression is required in both hematopoietic and non-hematopoietic cellular compartments and is dependent on Stat1. Only plays a partial role in the control of latent Toxoplasma infection. Involved in the clearance of acute protozoan infections by regulating autophagy, possibly by promoting the fusion of phagosomes with lysosomes for efficient degradation of vacuoles containing parasites. Probably involved in membrane disruption of parasite-containing vacuoles. In addition to its role in resistance to acute infection by protozoan, also acts as a negative regulator of the integrated stress response (ISR) following coxsackievirus B3 infection. Promotes differentiation of activated CD8(+) T-cells. In Mus musculus (Mouse), this protein is Immunity-related GTPase family M protein 3.